A 1179-amino-acid polypeptide reads, in one-letter code: Serine/threonine-protein kinase pakG (1179 aa).

Residues 12-53 (SKTNEDIELIKQKLKEDRELLEKERAQFEEERKIIFESLNKV) are a coiled coil. Residues 111 to 124 (IGTPFNVQHKVHVD) enclose the CRIB domain. The Protein kinase domain occupies 139–390 (FLIDCILGTG…AIELLTHPFL (252 aa)). ATP-binding positions include 145–153 (LGTGSYGTV) and K168. D257 serves as the catalytic Proton acceptor. Disordered stretches follow at residues 414–469 (KKKK…SSLD), 589–631 (IGNS…NNNN), 705–1086 (SSSS…PITL), and 1121–1179 (TEIN…SPKK). A coiled-coil region spans residues 621 to 668 (NNNNNNNNNNNEFLINQIKKELILDFNENMKQYINQQLTNLKEEMLKE). 2 stretches are compositionally biased toward low complexity: residues 705–723 (SSSSSSSFLNSSPSSSNSS) and 743–761 (LPPSQQSTPVTTTTTTSSP). The span at 762–776 (SPSPSPSPSPSPSSP) shows a compositional bias: pro residues. 2 stretches are compositionally biased toward low complexity: residues 777–788 (LPSSSTSTVNTP) and 812–833 (NNNNTNNNNNNNNSNNNNNNNN). Positions 834–857 (VIQSPKLNNRPLSPTTPTKQFNNR) are enriched in polar residues. The segment covering 864-891 (FNNRPPSPSKFNNRPPSPSNRPLSPKNS) has biased composition (low complexity). The span at 892–946 (YNSLEKSNNGSISNNRPLSPKNSLEKSTTQNNTSSEDISTTTVTVTSEQGGTPIT) shows a compositional bias: polar residues. Pro residues predominate over residues 954-963 (RPKPSPPPIP). 3 stretches are compositionally biased toward low complexity: residues 964–997 (MNKSSPKRAPSPSSNRRLSSSFTAQSSTASTIAA), 1024–1046 (TTITSSTNSPIKPLSPLNKSPNS), and 1053–1077 (ITTSNISNNSNINNNNNNNSNSSSN). The span at 1121–1135 (TEINLPSSSPSTPQK) shows a compositional bias: polar residues. Positions 1137 to 1158 (NTPSSIPTTPTTPTTNGGSVSS) are enriched in low complexity.

This sequence belongs to the protein kinase superfamily. STE Ser/Thr protein kinase family. STE20 subfamily. Mg(2+) is required as a cofactor.

The enzyme catalyses L-seryl-[protein] + ATP = O-phospho-L-seryl-[protein] + ADP + H(+). It catalyses the reaction L-threonyl-[protein] + ATP = O-phospho-L-threonyl-[protein] + ADP + H(+). In Dictyostelium discoideum (Social amoeba), this protein is Serine/threonine-protein kinase pakG.